The primary structure comprises 348 residues: Phospho-N-acetylmuramoyl-pentapeptide-transferase (348 aa).

10 helical membrane-spanning segments follow: residues 11–31 (SLIL…IFLG), 67–87 (TAGG…LLPL), 92–112 (TWLF…DDIV), 128–148 (FIVQ…IDKE), 163–183 (IFLG…MLAI), 198–218 (GLAT…AIMS), 222–242 (PLAY…LAFL), 251–271 (VFMG…CAVM), 276–296 (LFLI…ILQV), and 326–346 (VVAR…VAAL).

This sequence belongs to the glycosyltransferase 4 family. MraY subfamily. Mg(2+) serves as cofactor.

It localises to the cell inner membrane. It catalyses the reaction UDP-N-acetyl-alpha-D-muramoyl-L-alanyl-gamma-D-glutamyl-meso-2,6-diaminopimeloyl-D-alanyl-D-alanine + di-trans,octa-cis-undecaprenyl phosphate = di-trans,octa-cis-undecaprenyl diphospho-N-acetyl-alpha-D-muramoyl-L-alanyl-D-glutamyl-meso-2,6-diaminopimeloyl-D-alanyl-D-alanine + UMP. The protein operates within cell wall biogenesis; peptidoglycan biosynthesis. Its function is as follows. Catalyzes the initial step of the lipid cycle reactions in the biosynthesis of the cell wall peptidoglycan: transfers peptidoglycan precursor phospho-MurNAc-pentapeptide from UDP-MurNAc-pentapeptide onto the lipid carrier undecaprenyl phosphate, yielding undecaprenyl-pyrophosphoryl-MurNAc-pentapeptide, known as lipid I. This chain is Phospho-N-acetylmuramoyl-pentapeptide-transferase, found in Chlamydia felis (strain Fe/C-56) (Chlamydophila felis).